The primary structure comprises 309 residues: Protein FdhE (309 aa).

The protein belongs to the FdhE family.

The protein resides in the cytoplasm. Functionally, necessary for formate dehydrogenase activity. In Escherichia coli (strain K12 / MC4100 / BW2952), this protein is Protein FdhE.